Consider the following 919-residue polypeptide: Eukaryotic translation initiation factor 3 subunit C (919 aa).

Residues 1 to 28 are disordered; the sequence is MSRFFANGSDSESESSEEEVQAPNFNKA. Residues 11-20 show a composition bias toward acidic residues; the sequence is SESESSEEEV. Serine 34, serine 165, and serine 177 each carry phosphoserine. The segment at 154-275 is disordered; sequence LSRFRENPQE…EQKIKLRKRA (122 aa). The segment covering 162-171 has biased composition (acidic residues); the sequence is QEESENEDEE. Acidic residues predominate over residues 210–236; that stretch reads ADDEDSDESIDWDPDTESETESSEDEN. Positions 241-269 are enriched in basic and acidic residues; that stretch reads MRERFLKRSTEKDDKDDDKRKDKRKEQKI. One can recognise a PCI domain in the interval 640 to 816; it reads FHMHINLELL…ETVVMHRSEP (177 aa). The segment at 848–919 is disordered; sequence FFQRGNMGNR…QQQVQTIDEE (72 aa). A compositionally biased stretch (basic residues) spans 883–894; that stretch reads QRNRNQRGHHKN. The segment covering 895 to 919 has biased composition (low complexity); that stretch reads QQNQNQQQQQQHQREQQQVQTIDEE.

It belongs to the eIF-3 subunit C family. As to quaternary structure, component of the eukaryotic translation initiation factor 3 (eIF-3) complex. The eIF-3 complex interacts with pix.

The protein localises to the cytoplasm. In terms of biological role, component of the eukaryotic translation initiation factor 3 (eIF-3) complex, which is involved in protein synthesis of a specialized repertoire of mRNAs and, together with other initiation factors, stimulates binding of mRNA and methionyl-tRNAi to the 40S ribosome. The eIF-3 complex specifically targets and initiates translation of a subset of mRNAs involved in cell proliferation. The sequence is that of Eukaryotic translation initiation factor 3 subunit C from Drosophila willistoni (Fruit fly).